Consider the following 231-residue polypeptide: 5'-methylthioadenosine/S-adenosylhomocysteine nucleosidase (231 aa).

The active-site Proton acceptor is the glutamate 12. Residues glycine 78, methionine 153, and 174–175 (ME) contribute to the substrate site. Catalysis depends on aspartate 198, which acts as the Proton donor.

The protein belongs to the PNP/UDP phosphorylase family. MtnN subfamily.

It carries out the reaction S-adenosyl-L-homocysteine + H2O = S-(5-deoxy-D-ribos-5-yl)-L-homocysteine + adenine. The catalysed reaction is S-methyl-5'-thioadenosine + H2O = 5-(methylsulfanyl)-D-ribose + adenine. The enzyme catalyses 5'-deoxyadenosine + H2O = 5-deoxy-D-ribose + adenine. The protein operates within amino-acid biosynthesis; L-methionine biosynthesis via salvage pathway; S-methyl-5-thio-alpha-D-ribose 1-phosphate from S-methyl-5'-thioadenosine (hydrolase route): step 1/2. In terms of biological role, catalyzes the irreversible cleavage of the glycosidic bond in both 5'-methylthioadenosine (MTA) and S-adenosylhomocysteine (SAH/AdoHcy) to adenine and the corresponding thioribose, 5'-methylthioribose and S-ribosylhomocysteine, respectively. Also cleaves 5'-deoxyadenosine, a toxic by-product of radical S-adenosylmethionine (SAM) enzymes, into 5-deoxyribose and adenine. The protein is 5'-methylthioadenosine/S-adenosylhomocysteine nucleosidase of Bacillus velezensis (strain DSM 23117 / BGSC 10A6 / LMG 26770 / FZB42) (Bacillus amyloliquefaciens subsp. plantarum).